The chain runs to 734 residues: Photosystem I P700 chlorophyll a apoprotein A2 (734 aa).

Helical transmembrane passes span 46-69, 135-158, 175-199, 273-291, 330-353, 369-395, 417-439, and 517-535; these read IFAS…FHVA, LYTG…LHLQ, LNHH…HVAI, IAHH…GHMY, VHFQ…QHMY, AALY…IFFI, AIIS…LYVH, and FLVH…LILV. [4Fe-4S] cluster is bound by residues Cys559 and Cys568. Helical transmembrane passes span 575 to 596 and 643 to 665; these read AFYL…YWHW and LSVW…MFLI. Positions 654, 662, and 670 each coordinate chlorophyll a. Trp671 contributes to the phylloquinone binding site. Residues 707-727 traverse the membrane as a helical segment; sequence LVGLAHFSVGYIFTYAAFLIA.

Belongs to the PsaA/PsaB family. As to quaternary structure, the PsaA/B heterodimer binds the P700 chlorophyll special pair and subsequent electron acceptors. PSI consists of a core antenna complex that captures photons, and an electron transfer chain that converts photonic excitation into a charge separation. The eukaryotic PSI reaction center is composed of at least 11 subunits. It depends on P700 is a chlorophyll a/chlorophyll a' dimer, A0 is one or more chlorophyll a, A1 is one or both phylloquinones and FX is a shared 4Fe-4S iron-sulfur center. as a cofactor.

The protein localises to the plastid. It is found in the chloroplast thylakoid membrane. The enzyme catalyses reduced [plastocyanin] + hnu + oxidized [2Fe-2S]-[ferredoxin] = oxidized [plastocyanin] + reduced [2Fe-2S]-[ferredoxin]. Functionally, psaA and PsaB bind P700, the primary electron donor of photosystem I (PSI), as well as the electron acceptors A0, A1 and FX. PSI is a plastocyanin-ferredoxin oxidoreductase, converting photonic excitation into a charge separation, which transfers an electron from the donor P700 chlorophyll pair to the spectroscopically characterized acceptors A0, A1, FX, FA and FB in turn. Oxidized P700 is reduced on the lumenal side of the thylakoid membrane by plastocyanin. The chain is Photosystem I P700 chlorophyll a apoprotein A2 from Platanus occidentalis (Sycamore).